A 162-amino-acid chain; its full sequence is Allantoicase (162 aa).

This sequence belongs to the allantoicase family. As to quaternary structure, homohexamer. As to expression, expressed in zygote.

It carries out the reaction allantoate + H2O = (S)-ureidoglycolate + urea. The protein operates within nitrogen metabolism; (S)-allantoin degradation; (S)-ureidoglycolate from allantoate (aminidohydrolase route): step 1/1. Catalyzes the degradation of allantoate to (-)-ureidoglycolate and (+)-ureidoglycolate to glyoxylate. In Chlamydomonas reinhardtii (Chlamydomonas smithii), this protein is Allantoicase.